We begin with the raw amino-acid sequence, 264 residues long: Thymidylate synthase (264 aa).

Residue Arg-21 participates in dUMP binding. His-51 contacts (6R)-5,10-methylene-5,6,7,8-tetrahydrofolate. 126–127 (RR) provides a ligand contact to dUMP. Residue Cys-146 is the Nucleophile of the active site. Residues 166–169 (RSCD), Asn-177, and 207–209 (HLY) each bind dUMP. Residue Asp-169 participates in (6R)-5,10-methylene-5,6,7,8-tetrahydrofolate binding. A (6R)-5,10-methylene-5,6,7,8-tetrahydrofolate-binding site is contributed by Ala-263.

This sequence belongs to the thymidylate synthase family. Bacterial-type ThyA subfamily. As to quaternary structure, homodimer.

It localises to the cytoplasm. The catalysed reaction is dUMP + (6R)-5,10-methylene-5,6,7,8-tetrahydrofolate = 7,8-dihydrofolate + dTMP. It participates in pyrimidine metabolism; dTTP biosynthesis. Functionally, catalyzes the reductive methylation of 2'-deoxyuridine-5'-monophosphate (dUMP) to 2'-deoxythymidine-5'-monophosphate (dTMP) while utilizing 5,10-methylenetetrahydrofolate (mTHF) as the methyl donor and reductant in the reaction, yielding dihydrofolate (DHF) as a by-product. This enzymatic reaction provides an intracellular de novo source of dTMP, an essential precursor for DNA biosynthesis. The sequence is that of Thymidylate synthase from Escherichia coli O9:H4 (strain HS).